Consider the following 312-residue polypeptide: Deoxyribonuclease-1-like 1 (312 aa).

An N-terminal signal peptide occupies residues 1-35 (MPSGQPVFPRRVPDAYIAMRGLVVASLLILLVGGT). N102 carries an N-linked (GlcNAc...) asparagine glycan. E113 is a catalytic residue. An N-linked (GlcNAc...) asparagine glycan is attached at N133. Residue H164 is part of the active site. A disulfide bridge links C203 with C240. N-linked (GlcNAc...) asparagine glycosylation occurs at N239.

This sequence belongs to the DNase I family.

Its subcellular location is the endoplasmic reticulum. This is Deoxyribonuclease-1-like 1 (Dnase1l1) from Rattus norvegicus (Rat).